We begin with the raw amino-acid sequence, 369 residues long: Mitogen-activated protein kinase 5 (369 aa).

In terms of domain architecture, Protein kinase spans 36-322 (QPPIMPIGRG…VEEALDHPYL (287 aa)). ATP is bound by residues 42-50 (IGRGAYGIV) and K65. D162 (proton acceptor) is an active-site residue. The residue at position 194 (T194) is a Phosphothreonine. Positions 194 to 196 (TEY) match the TXY motif. Position 196 is a phosphotyrosine (Y196).

It belongs to the protein kinase superfamily. CMGC Ser/Thr protein kinase family. MAP kinase subfamily. Interacts with MKK1. In terms of processing, dually phosphorylated on Thr-194 and Tyr-196, which activates the enzyme.

The catalysed reaction is L-seryl-[protein] + ATP = O-phospho-L-seryl-[protein] + ADP + H(+). It catalyses the reaction L-threonyl-[protein] + ATP = O-phospho-L-threonyl-[protein] + ADP + H(+). Activated by threonine and tyrosine phosphorylation. Its function is as follows. Involved in disease resistance and abiotic stress tolerance signaling pathways. This chain is Mitogen-activated protein kinase 5 (MPK5), found in Oryza sativa subsp. indica (Rice).